We begin with the raw amino-acid sequence, 134 residues long: MSWQAYVDDHLMCDIEGHEGHRLTAAAIVGQDGSVWAQSATFPQFKPEEMNGIMTDFNEPGHLAPTGLHLGGTKYMVIQGEAGAVIRGKKGSGGITIKKTGQALVFGIYEEPVTPGQCNMVVERLGDYLIEQGL.

The cysteines at positions 13 and 118 are disulfide-linked. The short motif at 84–100 is the Involved in PIP2 interaction element; the sequence is AVIRGKKGSGGITIKKT. At T114 the chain carries Phosphothreonine.

This sequence belongs to the profilin family. In terms of assembly, occurs in many kinds of cells as a complex with monomeric actin in a 1:1 ratio. Phosphorylated by MAP kinases.

The protein localises to the cytoplasm. It is found in the cytoskeleton. Functionally, binds to actin and affects the structure of the cytoskeleton. At high concentrations, profilin prevents the polymerization of actin, whereas it enhances it at low concentrations. This Olea europaea (Common olive) protein is Profilin-2.